Consider the following 252-residue polypeptide: 3-dehydroquinate dehydratase (252 aa).

3-dehydroquinate contacts are provided by residues 46 to 48 (EWR) and R82. H143 serves as the catalytic Proton donor/acceptor. Catalysis depends on K170, which acts as the Schiff-base intermediate with substrate. Residues R212, S231, and Q235 each contribute to the 3-dehydroquinate site.

It belongs to the type-I 3-dehydroquinase family. In terms of assembly, homodimer.

It catalyses the reaction 3-dehydroquinate = 3-dehydroshikimate + H2O. Its pathway is metabolic intermediate biosynthesis; chorismate biosynthesis; chorismate from D-erythrose 4-phosphate and phosphoenolpyruvate: step 3/7. Involved in the third step of the chorismate pathway, which leads to the biosynthesis of aromatic amino acids. Catalyzes the cis-dehydration of 3-dehydroquinate (DHQ) and introduces the first double bond of the aromatic ring to yield 3-dehydroshikimate. The protein is 3-dehydroquinate dehydratase of Listeria monocytogenes serotype 4b (strain CLIP80459).